The primary structure comprises 495 residues: Fusicoccadiene 8-ol C-16 hydroxylase (495 aa).

The chain crosses the membrane as a helical span at residues 12 to 32 (VLLALIVWIGTTIIYNIYFHP). 2 N-linked (GlcNAc...) asparagine glycosylation sites follow: Asn249 and Asn317. Cys439 contacts heme.

Belongs to the cytochrome P450 family. It depends on heme as a cofactor.

The protein localises to the membrane. It functions in the pathway mycotoxin biosynthesis. Cytochrome P450 monooxygenase; part of the gene cluster that mediates the biosynthesis of the diterpene glucoside brassicicene C. In the first step of the brassicicene C biosynthesis, the bifunctional diterpene synthase bsc8 that possesses both prenyl transferase and terpene cyclase activity, converts isopentenyl diphosphate and dimethylallyl diphosphate into geranylgeranyl diphosphate (GGDP) that is further converted into fusicocca-2,10(14)-diene, the first precursor for brassicicene C. Fusicocca-2,10(14)-diene is then substrate of cytochrome P450 monooxygenase bsc1 for hydroxylation at the C-8 position. Oxidation at C-16 position to aldehyde is then catalyzed by the cytochrome P450 monooyxygenase bsc7, yielding fusicocca-2,10(14)-diene-8-beta,16-diol. Follows the isomerization of the double bond and reduction of aldehyde to alcohol catalyzed by the short-chain dehydrogenase/reductase bsc3 to yield the diol compound fusicocca-1,10(14)-diene-8 beta,16-diol. The next step is the oxidation at the C-3 position of fusicocca-2,10(14)-diene-8-beta,16-diol catalyzed by the alpha-ketoglutarate dependent dioxygenase bsc9, to produce a triol compound. Methylation of the hydroxy group at position 16 is performed by the methyltransferase bsc6. 16-O-methylation is followed by oxidation at the C-13 position to ketone and an alkyl shift of the methyl group leads to brassicicene C. Although the probable acetyltransferase bsc4 is included in the gene cluster, no acetylation reactions are necessary for brassicicene C biosynthesis. However, the fact that brassicicene E, which is a structurally related compound having an acetoxy group at position 12, was previously isolated from another strain of A.brassicicola suggests that the ATCC 96836 strain might also produce a small amount of brassicicene E. The protein is Fusicoccadiene 8-ol C-16 hydroxylase of Alternaria brassicicola (Dark leaf spot agent).